The chain runs to 118 residues: Small ribosomal subunit protein uS13 (118 aa).

Residues 94–118 (GLPVRGQRTKTNARTRKGPRKPIKK) form a disordered region.

This sequence belongs to the universal ribosomal protein uS13 family. Part of the 30S ribosomal subunit. Forms a loose heterodimer with protein S19. Forms two bridges to the 50S subunit in the 70S ribosome.

Its function is as follows. Located at the top of the head of the 30S subunit, it contacts several helices of the 16S rRNA. In the 70S ribosome it contacts the 23S rRNA (bridge B1a) and protein L5 of the 50S subunit (bridge B1b), connecting the 2 subunits; these bridges are implicated in subunit movement. Contacts the tRNAs in the A and P-sites. This chain is Small ribosomal subunit protein uS13, found in Pasteurella multocida (strain Pm70).